The following is a 201-amino-acid chain: Putative toxin HigB2 (201 aa).

The protein belongs to the mycobacterial HigB family.

Functionally, putative toxic component of a type II toxin-antitoxin (TA) system. Its cognate antitoxin would be HigA2. The chain is Putative toxin HigB2 from Mycobacterium tuberculosis (strain ATCC 25618 / H37Rv).